The chain runs to 109 residues: Photosystem II reaction center Psb28 protein (109 aa).

This sequence belongs to the Psb28 family. Part of the photosystem II complex.

The protein resides in the plastid. The protein localises to the chloroplast thylakoid membrane. The sequence is that of Photosystem II reaction center Psb28 protein from Cyanidioschyzon merolae (strain NIES-3377 / 10D) (Unicellular red alga).